Reading from the N-terminus, the 87-residue chain is Large ribosomal subunit protein bL31B-2/bL31B-3 (87 aa).

Belongs to the bacterial ribosomal protein bL31 family. Type B subfamily. In terms of assembly, part of the 50S ribosomal subunit.

The chain is Large ribosomal subunit protein bL31B-2/bL31B-3 (rpmE2-2) from Escherichia coli O157:H7.